Reading from the N-terminus, the 122-residue chain is Large ribosomal subunit protein uL18 (122 aa).

It belongs to the universal ribosomal protein uL18 family. In terms of assembly, part of the 50S ribosomal subunit; part of the 5S rRNA/L5/L18/L25 subcomplex. Contacts the 5S and 23S rRNAs.

Functionally, this is one of the proteins that bind and probably mediate the attachment of the 5S RNA into the large ribosomal subunit, where it forms part of the central protuberance. This Mycobacterium avium (strain 104) protein is Large ribosomal subunit protein uL18.